We begin with the raw amino-acid sequence, 553 residues long: Rhodopsin kinase GRK7 (553 aa).

A Phosphoserine; by PKA modification is found at S36. The RGS domain occupies 56 to 176 (FHSLCEQQPI…VTSAFYDKFL (121 aa)). Positions 191–454 (FTEFRVLGKG…SDDPRKHHFF (264 aa)) constitute a Protein kinase domain. ATP-binding positions include 197 to 205 (LGKGGFGEV) and K220. D316 functions as the Proton acceptor in the catalytic mechanism. The AGC-kinase C-terminal domain occupies 455–520 (KTINFPRLEA…GAVPIAWQEE (66 aa)). C550 bears the Cysteine methyl ester mark. C550 is lipidated: S-geranylgeranyl cysteine. A propeptide spans 551–553 (LLL) (removed in mature form).

The protein belongs to the protein kinase superfamily. AGC Ser/Thr protein kinase family. GPRK subfamily. As to quaternary structure, interacts (when prenylated) with PDE6D; this promotes release from membranes. In terms of processing, autophosphorylated in vitro at Ser-490. Phosphorylation at Ser-36 is regulated by light and activated by cAMP. Retinal cones, outer and inner segments.

It is found in the membrane. The enzyme catalyses L-threonyl-[rhodopsin] + ATP = O-phospho-L-threonyl-[rhodopsin] + ADP + H(+). The catalysed reaction is L-seryl-[rhodopsin] + ATP = O-phospho-L-seryl-[rhodopsin] + ADP + H(+). Inhibited by phosphorylation of Ser-36. In terms of biological role, retina-specific kinase involved in the shutoff of the photoresponse and adaptation to changing light conditions via cone opsin phosphorylation, including rhodopsin (RHO). The chain is Rhodopsin kinase GRK7 (GRK7) from Homo sapiens (Human).